A 273-amino-acid chain; its full sequence is Peptidyl-prolyl cis-trans isomerase E (273 aa).

The RRM domain occupies 1–48 (MPMDYQTEKHRGFAFVEFEEVEDAMSAIDNMNESEIFGRTIRVNVARP). The disordered stretch occupies residues 77–103 (RKLDEPDIVNPSDTSENVEDLSDEEMR). Residues 115–271 (FFDIRIGNGD…EPVIISRCGE (157 aa)) enclose the PPIase cyclophilin-type domain.

It belongs to the cyclophilin-type PPIase family. PPIase E subfamily.

It is found in the cytoplasm. It carries out the reaction [protein]-peptidylproline (omega=180) = [protein]-peptidylproline (omega=0). Its activity is regulated as follows. Binds cyclosporin A (CsA). CsA mediates some of its effects via an inhibitory action on PPIase. In terms of biological role, PPIases accelerate the folding of proteins. It catalyzes the cis-trans isomerization of proline imidic peptide bonds in oligopeptides. This is Peptidyl-prolyl cis-trans isomerase E from Schistosoma mansoni (Blood fluke).